Reading from the N-terminus, the 37-residue chain is Bacteriocin lactococcin MMFII (37 aa).

An intrachain disulfide couples cysteine 9 to cysteine 14.

The protein localises to the secreted. Functionally, bacteriocin active against Listeria monocytogenes and Lactococcus cremoris. In Lactococcus lactis subsp. lactis (Streptococcus lactis), this protein is Bacteriocin lactococcin MMFII.